The following is a 1136-amino-acid chain: Receptor-type guanylate cyclase gcy-4 (1136 aa).

Positions 1 to 21 (MRQLNYYIFISTILTYNLTHG) are cleaved as a signal peptide. Residues 22-485 (QGPRPVIRVG…CPLPIFEQYR (464 aa)) lie on the Extracellular side of the membrane. Asn-40, Asn-194, Asn-252, Asn-351, Asn-377, Asn-386, and Asn-438 each carry an N-linked (GlcNAc...) asparagine glycan. The chain crosses the membrane as a helical span at residues 486-506 (ALVIVAIAVTILILLAIIICM). Topologically, residues 507–1136 (SSKIRNRRVE…LRREMMRVEV (630 aa)) are cytoplasmic. Residues 533–833 (LPMHRRASKS…EDNLMDHVFS (301 aa)) enclose the Protein kinase domain. A disordered region spans residues 536–565 (HRRASKSSQESETESASETENFTSKSGDTM). Residues 891 to 1021 (TVFFSDLVKF…DTVNTASRME (131 aa)) form the Guanylate cyclase domain.

This sequence belongs to the adenylyl cyclase class-4/guanylyl cyclase family. As to expression, expression is biased toward ASE right (ASER) sensory neuron.

It is found in the cell membrane. The enzyme catalyses GTP = 3',5'-cyclic GMP + diphosphate. Its function is as follows. Guanylate cyclase involved in the production of the second messenger cGMP. Regulates chemotaxis responses toward Br(1-) and I(1-) salt ions in ASE right (ASER) sensory neuron. The protein is Receptor-type guanylate cyclase gcy-4 of Caenorhabditis elegans.